The sequence spans 127 residues: Fluoride-specific ion channel FluC (127 aa).

4 consecutive transmembrane segments (helical) span residues Ser4–Leu24, Gly36–Ala56, Leu68–Val88, and Ala99–Phe119. Residues Gly75 and Thr78 each coordinate Na(+).

This sequence belongs to the fluoride channel Fluc/FEX (TC 1.A.43) family.

It localises to the cell inner membrane. The enzyme catalyses fluoride(in) = fluoride(out). Its activity is regulated as follows. Na(+) is not transported, but it plays an essential structural role and its presence is essential for fluoride channel function. Functionally, fluoride-specific ion channel. Important for reducing fluoride concentration in the cell, thus reducing its toxicity. The sequence is that of Fluoride-specific ion channel FluC from Pseudomonas aeruginosa (strain UCBPP-PA14).